The chain runs to 245 residues: ATP synthase subunit b (245 aa).

A helical transmembrane segment spans residues 3–23; the sequence is SFNLLTIVSSIVNLLALAWII.

This sequence belongs to the ATPase B chain family. As to quaternary structure, F-type ATPases have 2 components, F(1) - the catalytic core - and F(0) - the membrane proton channel. F(1) has five subunits: alpha(3), beta(3), gamma(1), delta(1), epsilon(1). F(0) has three main subunits: a(1), b(2) and c(10-14). The alpha and beta chains form an alternating ring which encloses part of the gamma chain. F(1) is attached to F(0) by a central stalk formed by the gamma and epsilon chains, while a peripheral stalk is formed by the delta and b chains.

It is found in the cell inner membrane. F(1)F(0) ATP synthase produces ATP from ADP in the presence of a proton or sodium gradient. F-type ATPases consist of two structural domains, F(1) containing the extramembraneous catalytic core and F(0) containing the membrane proton channel, linked together by a central stalk and a peripheral stalk. During catalysis, ATP synthesis in the catalytic domain of F(1) is coupled via a rotary mechanism of the central stalk subunits to proton translocation. Its function is as follows. Component of the F(0) channel, it forms part of the peripheral stalk, linking F(1) to F(0). The sequence is that of ATP synthase subunit b from Dictyoglomus thermophilum (strain ATCC 35947 / DSM 3960 / H-6-12).